Here is a 178-residue protein sequence, read N- to C-terminus: ATP synthase subunit delta (178 aa).

This sequence belongs to the ATPase delta chain family. In terms of assembly, F-type ATPases have 2 components, F(1) - the catalytic core - and F(0) - the membrane proton channel. F(1) has five subunits: alpha(3), beta(3), gamma(1), delta(1), epsilon(1). F(0) has three main subunits: a(1), b(2) and c(10-14). The alpha and beta chains form an alternating ring which encloses part of the gamma chain. F(1) is attached to F(0) by a central stalk formed by the gamma and epsilon chains, while a peripheral stalk is formed by the delta and b chains.

It is found in the cell inner membrane. Its function is as follows. F(1)F(0) ATP synthase produces ATP from ADP in the presence of a proton or sodium gradient. F-type ATPases consist of two structural domains, F(1) containing the extramembraneous catalytic core and F(0) containing the membrane proton channel, linked together by a central stalk and a peripheral stalk. During catalysis, ATP synthesis in the catalytic domain of F(1) is coupled via a rotary mechanism of the central stalk subunits to proton translocation. In terms of biological role, this protein is part of the stalk that links CF(0) to CF(1). It either transmits conformational changes from CF(0) to CF(1) or is implicated in proton conduction. The sequence is that of ATP synthase subunit delta from Pseudomonas entomophila (strain L48).